The sequence spans 476 residues: Probable cytosolic Fe-S cluster assembly factor GJ13047 (476 aa).

The [4Fe-4S] cluster site is built by Cys-23, Cys-68, Cys-71, Cys-74, Cys-187, Cys-243, Cys-395, and Cys-399.

The protein belongs to the NARF family.

Functionally, component of the cytosolic iron-sulfur (Fe/S) protein assembly machinery. Required for maturation of extramitochondrial Fe/S proteins. This Drosophila virilis (Fruit fly) protein is Probable cytosolic Fe-S cluster assembly factor GJ13047.